Reading from the N-terminus, the 244-residue chain is 5-oxoprolinase subunit A (244 aa).

Belongs to the LamB/PxpA family. As to quaternary structure, forms a complex composed of PxpA, PxpB and PxpC.

It catalyses the reaction 5-oxo-L-proline + ATP + 2 H2O = L-glutamate + ADP + phosphate + H(+). Its function is as follows. Catalyzes the cleavage of 5-oxoproline to form L-glutamate coupled to the hydrolysis of ATP to ADP and inorganic phosphate. This is 5-oxoprolinase subunit A from Salmonella typhimurium (strain LT2 / SGSC1412 / ATCC 700720).